Consider the following 541-residue polypeptide: Carotenoid-cleaving dioxygenase, mitochondrial (541 aa).

Residues H188, H248, H319, and H535 each coordinate Fe cation.

This sequence belongs to the carotenoid oxygenase family. It depends on Fe(2+) as a cofactor. In terms of tissue distribution, widely expressed. Detected in heart, spleen, lung, intestine, colon, stomach, kidney, bladder, and prostate. Highly expressed in liver and testis (at protein level).

Its subcellular location is the mitochondrion. The catalysed reaction is all-trans-beta-carotene + O2 = beta-ionone + all-trans-10'-apo-beta-carotenal. It catalyses the reaction 5-cis-lycopene + O2 = 5-cis-10'-apo-lycopenal + (3E,5E)-6,10-dimethylundeca-3,5,9-trien-2-one. The enzyme catalyses 13-cis-lycopene + O2 = 13-cis-10'-apo-lycopenal + (3E,5E)-6,10-dimethylundeca-3,5,9-trien-2-one. It carries out the reaction lutein + O2 = (3R,6R)-hydroxy-alpha-ionone + (3R)-3-hydroxy-10'-apo-beta-carotenal. The catalysed reaction is lutein + O2 = (3R,6R)-3-hydroxy-10'-apo-alpha-carotenal + (3R)-hydroxy-beta-ionone. It catalyses the reaction all-trans-zeaxanthin + 2 O2 = 4,9-dimethyldodeca-2,4,6,8,10-pentaenedial + 2 (3R)-hydroxy-beta-ionone. The enzyme catalyses all-trans-zeaxanthin + O2 = (3R)-3-hydroxy-10'-apo-beta-carotenal + (3R)-hydroxy-beta-ionone. It carries out the reaction beta-cryptoxanthin + O2 = all-trans-10'-apo-beta-carotenal + (3R)-hydroxy-beta-ionone. The catalysed reaction is all-trans-10'-apo-beta-carotenal + O2 = beta-ionone + 4,9-dimethyldodeca-2,4,6,8,10-pentaenedial. It catalyses the reaction (3R)-3-hydroxy-10'-apo-beta-carotenal + O2 = 4,9-dimethyldodeca-2,4,6,8,10-pentaenedial + (3R)-hydroxy-beta-ionone. The enzyme catalyses (3R,6R)-3-hydroxy-10'-apo-alpha-carotenal + O2 = (3R,6R)-hydroxy-alpha-ionone + 4,9-dimethyldodeca-2,4,6,8,10-pentaenedial. Broad specificity mitochondrial dioxygenase that mediates the asymmetric oxidative cleavage of carotenoids. Cleaves carotenes (pure hydrocarbon carotenoids) such as all-trans-beta-carotene and lycopene as well as xanthophylls (oxygenated carotenoids) such as zeaxanthin, lutein and beta-cryptoxanthin at both the 9,10 and the 9',10' carbon-carbon double bond. Through its function in carotenoids metabolism regulates oxidative stress and the production of important signaling molecules. The sequence is that of Carotenoid-cleaving dioxygenase, mitochondrial from Mustela putorius furo (European domestic ferret).